A 250-amino-acid polypeptide reads, in one-letter code: Pyrroloquinoline-quinone synthase (250 aa).

This sequence belongs to the PqqC family.

The enzyme catalyses 6-(2-amino-2-carboxyethyl)-7,8-dioxo-1,2,3,4,7,8-hexahydroquinoline-2,4-dicarboxylate + 3 O2 = pyrroloquinoline quinone + 2 H2O2 + 2 H2O + H(+). The protein operates within cofactor biosynthesis; pyrroloquinoline quinone biosynthesis. Its function is as follows. Ring cyclization and eight-electron oxidation of 3a-(2-amino-2-carboxyethyl)-4,5-dioxo-4,5,6,7,8,9-hexahydroquinoline-7,9-dicarboxylic-acid to PQQ. This Pseudomonas aeruginosa (strain LESB58) protein is Pyrroloquinoline-quinone synthase.